The chain runs to 100 residues: Large ribosomal subunit protein uL23 (100 aa).

It belongs to the universal ribosomal protein uL23 family. As to quaternary structure, part of the 50S ribosomal subunit. Contacts protein L29, and trigger factor when it is bound to the ribosome.

Its function is as follows. One of the early assembly proteins it binds 23S rRNA. One of the proteins that surrounds the polypeptide exit tunnel on the outside of the ribosome. Forms the main docking site for trigger factor binding to the ribosome. The sequence is that of Large ribosomal subunit protein uL23 from Thermosynechococcus vestitus (strain NIES-2133 / IAM M-273 / BP-1).